Consider the following 615-residue polypeptide: Increased rDNA silencing protein 4 (615 aa).

4 disordered regions span residues 38-135, 152-260, 277-304, and 323-445; these read SNEV…SSHS, LLGI…NRSQ, PSIASSNTTTTTSNQGSGLPNLVPNYSS, and KPKH…NEDK. Polar residues predominate over residues 50 to 65; it reads VSRNPQTRLSEPSLQK. Low complexity-rich tracts occupy residues 121–135 and 157–168; these read HSQSKLSSDNNSSHS and SRSSSRNGSNES. Position 180 is a phosphoserine (Ser180). Over residues 184–198 the composition is skewed to low complexity; that stretch reads LLTSFSSGRRLSSSS. A compositionally biased stretch (polar residues) spans 248-260; the sequence is NPDTSDVISNRSQ. The span at 281–290 shows a compositional bias: low complexity; sequence SSNTTTTTSN. The segment covering 365-377 has biased composition (basic and acidic residues); it reads ENDHASSLHEGNL. Acidic residues predominate over residues 389–402; that stretch reads DVYDDTDSDSESDQ. The span at 409-438 shows a compositional bias: basic residues; sequence KPRKRDRIKRKIRNSANKTAHHRPIHRTRD. The EH domain occupies 460-571; sequence ERKRYESMWV…QCVWDSVDRY (112 aa).

It belongs to the IRS4 family. Interacts with INP51.

Functionally, with TAX4, acts as a positive regulator of INP51 activity and phosphatidylinositol 4,5-bisphosphate turnover. Negatively regulates signaling through the cell integrity pathway, including the MAP kinase SLT2. Also seems to be involved in rDNA silencing. This is Increased rDNA silencing protein 4 (IRS4) from Saccharomyces cerevisiae (strain ATCC 204508 / S288c) (Baker's yeast).